Here is a 142-residue protein sequence, read N- to C-terminus: Large ribosomal subunit protein uL11 (142 aa).

Belongs to the universal ribosomal protein uL11 family. In terms of assembly, part of the ribosomal stalk of the 50S ribosomal subunit. Interacts with L10 and the large rRNA to form the base of the stalk. L10 forms an elongated spine to which L12 dimers bind in a sequential fashion forming a multimeric L10(L12)X complex. One or more lysine residues are methylated.

Functionally, forms part of the ribosomal stalk which helps the ribosome interact with GTP-bound translation factors. This is Large ribosomal subunit protein uL11 from Pectobacterium atrosepticum (strain SCRI 1043 / ATCC BAA-672) (Erwinia carotovora subsp. atroseptica).